The following is a 288-amino-acid chain: Ankyrin repeat and SOCS box protein 8 (288 aa).

Ser-17 carries the phosphoserine modification. ANK repeat units follow at residues 52 to 81, 85 to 113, 117 to 146, and 150 to 179; these read GTLK…EVNA, YNRT…NPNA, NRDT…SVNA, and NNDT…EVRV. An SOCS box domain is found at 235–288; sequence QLCEKLTVLCSAPGTLKTLARYAVRRSLGLQYLPDAVKGLPLPASLKEYLLLLE.

Belongs to the ankyrin SOCS box (ASB) family. In terms of assembly, interacts with TBK1; this interaction promotes TBK1 proteasomal degradation. In terms of processing, phosphorylated by TBK1. Highest level of expression in skeletal muscle. Also expressed in heart, brain, placenta, liver, kidney and pancreas.

It localises to the cytoplasm. The protein operates within protein modification; protein ubiquitination. In terms of biological role, may be a substrate-recognition component of a SCF-like ECS (Elongin-Cullin-SOCS-box protein) E3 ubiquitin-protein ligase complex which mediates the ubiquitination and subsequent proteasomal degradation of target proteins. Inhibits IFN-beta production through the IRF3 signaling pathway by targeting TBK1 via 'Lys-48'-linked ubiquitination, leading to its proteasomal degradation. This chain is Ankyrin repeat and SOCS box protein 8 (ASB8), found in Homo sapiens (Human).